Here is a 711-residue protein sequence, read N- to C-terminus: Consortin (711 aa).

5 disordered regions span residues 1–157, 294–332, 370–389, 394–432, and 457–496; these read MDDS…NDPP, AVGTEAAAKEPEIETCPSTDPSGDRHEEEPQESSPGCHQ, ETAGSRSGPAAASNACKDSS, PPTEDHCGVARDPKVAPPSESVAEQKLSTGDDGALPGLI, and PRDQPHSSEVAEPRQPDVTASDGKSAQSQAGLETGPESAL. Residues 1-650 lie on the Cytoplasmic side of the membrane; the sequence is MDDSDPPTYS…LEQDEVGGGS (650 aa). Polar residues predominate over residues 63–77; it reads VSEQDSLNNNESFPS. The span at 109-120 shows a compositional bias: basic residues; it reads PAKRSPRAKKSS. Basic and acidic residues-rich tracts occupy residues 396-407 and 457-471; these read TEDHCGVARDPK and PRDQPHSSEVAEPRQ. Residues 478 to 487 are compositionally biased toward polar residues; that stretch reads DGKSAQSQAG. Residues 651 to 671 form a helical membrane-spanning segment; it reads CILLILLCIATVFLSVGGTAL. Residues 672–711 are Extracellular-facing; sequence YCTLGNIESPVCTDFADNVDFYYTKLLQGVAGLKHWVYLS.

Belongs to the CNST family. Interacts with connexins GJA1/CX43, GJB1/CX32, GJB2/CX26, GJB3/CX31, GJB6/CX30 and GJC1/CX45. Also interacts with GGA1 and GGA2. Does not interact with PANX1.

Its subcellular location is the cell membrane. It is found in the golgi apparatus. It localises to the trans-Golgi network membrane. The protein resides in the cytoplasmic vesicle. The protein localises to the secretory vesicle. Functionally, required for targeting of connexins to the plasma membrane. The protein is Consortin (Cnst) of Mus musculus (Mouse).